The sequence spans 358 residues: MNSFGIKFKISTFGESHGVAIGCLLDGVPAGLLIDEEFIQAELDRRKPGKSEFETARKEDDKVEILSGVFEGKSTGTPIAMIIYNTNQKSKDYSNIKDIFRPGHADFTYFHKYGLRDYRGGGRSSARETAARVAGGAVAKLMLKELGIEVQSGICEVDGIKSLEFDYESAKKSIIYALDSTKEEAQKEAILRAKNEHDSVGGVSRVLIKGVPVGLGQPLYYKMDAVLADAMMGINAVKAVEIGDGILSASLKGSINNDAIRADGFVTNHSGGILGGISNGEDIVMNVYFKPTPSIFKEQQTITCRDEEVDFSLKGRHDPCVAIRGTIVCEAMAALVIADMLLLNMGSEMSGVLTYYKK.

Residue arginine 46 coordinates NADP(+). FMN is bound by residues 123-125 (RSS), 235-236 (NA), glycine 275, 290-294 (KPTPS), and arginine 316.

The protein belongs to the chorismate synthase family. Homotetramer. Requires FMNH2 as cofactor.

It carries out the reaction 5-O-(1-carboxyvinyl)-3-phosphoshikimate = chorismate + phosphate. It participates in metabolic intermediate biosynthesis; chorismate biosynthesis; chorismate from D-erythrose 4-phosphate and phosphoenolpyruvate: step 7/7. Its function is as follows. Catalyzes the anti-1,4-elimination of the C-3 phosphate and the C-6 proR hydrogen from 5-enolpyruvylshikimate-3-phosphate (EPSP) to yield chorismate, which is the branch point compound that serves as the starting substrate for the three terminal pathways of aromatic amino acid biosynthesis. This reaction introduces a second double bond into the aromatic ring system. The sequence is that of Chorismate synthase from Sulfurimonas denitrificans (strain ATCC 33889 / DSM 1251) (Thiomicrospira denitrificans (strain ATCC 33889 / DSM 1251)).